The sequence spans 41 residues: Large ribosomal subunit protein bL36 (41 aa).

It belongs to the bacterial ribosomal protein bL36 family.

The chain is Large ribosomal subunit protein bL36 from Xylella fastidiosa (strain M23).